We begin with the raw amino-acid sequence, 183 residues long: Threonylcarbamoyl-AMP synthase (183 aa).

The YrdC-like domain maps to 1 to 183 (MNITQIIEKL…LFTNQLVRQG (183 aa)).

It belongs to the SUA5 family. TsaC subfamily.

It localises to the cytoplasm. The enzyme catalyses L-threonine + hydrogencarbonate + ATP = L-threonylcarbamoyladenylate + diphosphate + H2O. Required for the formation of a threonylcarbamoyl group on adenosine at position 37 (t(6)A37) in tRNAs that read codons beginning with adenine. Catalyzes the conversion of L-threonine, HCO(3)(-)/CO(2) and ATP to give threonylcarbamoyl-AMP (TC-AMP) as the acyladenylate intermediate, with the release of diphosphate. This chain is Threonylcarbamoyl-AMP synthase, found in Histophilus somni (strain 129Pt) (Haemophilus somnus).